Reading from the N-terminus, the 618-residue chain is 1-deoxy-D-xylulose-5-phosphate synthase (618 aa).

Thiamine diphosphate contacts are provided by residues His70 and 111-113; that span reads GHS. Residue Asp142 participates in Mg(2+) binding. Thiamine diphosphate-binding positions include 143–144, Asn171, Tyr278, and Glu360; that span reads GS. Position 171 (Asn171) interacts with Mg(2+).

The protein belongs to the transketolase family. DXPS subfamily. Homodimer. It depends on Mg(2+) as a cofactor. Thiamine diphosphate is required as a cofactor.

It catalyses the reaction D-glyceraldehyde 3-phosphate + pyruvate + H(+) = 1-deoxy-D-xylulose 5-phosphate + CO2. Its pathway is metabolic intermediate biosynthesis; 1-deoxy-D-xylulose 5-phosphate biosynthesis; 1-deoxy-D-xylulose 5-phosphate from D-glyceraldehyde 3-phosphate and pyruvate: step 1/1. Its function is as follows. Catalyzes the acyloin condensation reaction between C atoms 2 and 3 of pyruvate and glyceraldehyde 3-phosphate to yield 1-deoxy-D-xylulose-5-phosphate (DXP). The sequence is that of 1-deoxy-D-xylulose-5-phosphate synthase from Helicobacter pylori (strain J99 / ATCC 700824) (Campylobacter pylori J99).